The primary structure comprises 542 residues: MANNSPALTGNSQPQHQAAAAVTQQQQQCGGGGGATKPAVSGKQGNVLPLWGNEKTMNLNPMILTNILSSPYFKVQLYELKTYHEVVDEIYFKVTHVEPWEKGSRKTAGQTGMCGGVRGVGTGGIVSTAFCLLYKLFTLKLTRKQVMGLITHTDSPYIRALGFMYIRYTQPPTDLWDWFESFLDDEEDLDVKAGGGCVMTIGEMLRSFLTKLEWFSTLFPRIPVPVQKNIDQQIKTRPRKIKKDGKEGIEEIDRHVERRRSRSPRRSLSPRRSPRRSRSRSHHREGHGSSSFDRELEREKERQRLEREAKEREKERRRSRSIDRGLDRRRSRSRERHRSRSRSRDRKGDRRDRDREREKENERGRRRDRDYDKERGSDRERDRERSRERSKEQRSRGDGEEKKHKEDKEDRRHRDDKKESKKKHSRSRSRERKHRSRSRNAGKRSRSRSKDKSSRHKNESKEKANKRSRSGSQGRTGSVEKRKREHSPSREKSRKRSRSQDRSHKREHNDSKDQSDRQDHQSSQSGEPESQEKEHKSKDETV.

Residues 1 to 12 (MANNSPALTGNS) show a composition bias toward polar residues. A disordered region spans residues 1–41 (MANNSPALTGNSQPQHQAAAAVTQQQQQCGGGGGATKPAVS). Ala2 is modified (N-acetylalanine). Ser5 carries the phosphoserine modification. A compositionally biased stretch (low complexity) spans 13–28 (QPQHQAAAAVTQQQQQ). At Lys228 the chain carries N6-acetyllysine. The interval 233–542 (QIKTRPRKIK…KEHKSKDETV (310 aa)) is disordered. Basic and acidic residues predominate over residues 244–256 (DGKEGIEEIDRHV). Over residues 257–285 (ERRRSRSPRRSLSPRRSPRRSRSRSHHRE) the composition is skewed to basic residues. A phosphoserine mark is found at Ser289, Ser291, Ser319, and Ser321. Over residues 292–328 (FDRELEREKERQRLEREAKEREKERRRSRSIDRGLDR) the composition is skewed to basic and acidic residues. The stretch at 293-322 (DRELEREKERQRLEREAKEREKERRRSRSI) forms a coiled coil. Over residues 329–345 (RRSRSRERHRSRSRSRD) the composition is skewed to basic residues. Residues 346–419 (RKGDRRDRDR…DRRHRDDKKE (74 aa)) are compositionally biased toward basic and acidic residues. Positions 420–447 (SKKKHSRSRSRERKHRSRSRNAGKRSRS) are enriched in basic residues. Position 445 is a phosphoserine (Ser445). Over residues 448–465 (RSKDKSSRHKNESKEKAN) the composition is skewed to basic and acidic residues. 3 positions are modified to phosphoserine: Ser470, Ser472, and Ser478. Composition is skewed to basic and acidic residues over residues 478–491 (SVEK…PSRE) and 498–520 (RSQD…RQDH). Phosphoserine is present on residues Ser523, Ser525, and Ser530. Positions 530–542 (SQEKEHKSKDETV) are enriched in basic and acidic residues.

It belongs to the PRP38 family.

The protein resides in the nucleus. May be required for pre-mRNA splicing. The polypeptide is Pre-mRNA-splicing factor 38B (Prpf38b) (Mus musculus (Mouse)).